A 675-amino-acid polypeptide reads, in one-letter code: MAFSVEMPELGESVTEGTITQWLKSVGDTVEVDEPLLEVSTDKVDTEIPSPVAGVILEIKAEEDDTVDVGGVIAIIGDADETPANEAPADEAPAPAEEEEPVKEEPKKEAAPEAPAATGAATDVEMPELGESVTEGTITQWLKAVGDTVEVDEPLLEVSTDKVDTEIPSPVAGTIVEILADEDDTVDVGAVIARIGDANAAAAPAEEEAAPAEEEEPVKEEPKKEAAPEAPAATGAATDVEMPELGESVTEGTITQWLKAVGDTVEVDEPLLEVSTDKVDTEIPSPVAGTIVEILADEDDTVDVGAVIARIGDANAAAAPAEEEAAPAEEEEPVKEEPKKEEPKKEEPKKEAATTPAAASATVSASGDNVPYVTPLVRKLAEKHGVDLNTVTGTGIGGRIRKQDVLAAANGEAAPAEAAAPVSAWSTKSVDPEKAKLRGTTQKVNRIREITAMKTVEALQISAQLTQLHEVDMTRVAELRKKNKPAFIEKHGVNLTYLPFFVKAVVEALVSHPNVNASFNAKTKEMTYHSSVNLSIAVDTPAGLLTPVIHDAQDLSIPEIAKAIVDLADRSRNNKLKPNDLSGGTFTITNIGSEGALSDTPILVPPQAGILGTGAIVKRPVVITEDGIDSIAIRQMVFLPLTYDHQVVDGADAGRFLTTIKDRLETANFEGDLQL.

One can recognise a Lipoyl-binding 1 domain in the interval 2 to 77; it reads AFSVEMPELG…DVGGVIAIIG (76 aa). At lysine 43 the chain carries N6-lipoyllysine. The disordered stretch occupies residues 77-124; the sequence is GDADETPANEAPADEAPAPAEEEEPVKEEPKKEAAPEAPAATGAATDV. Low complexity-rich tracts occupy residues 84–95 and 112–124; these read ANEAPADEAPAP and PEAP…ATDV. A Lipoyl-binding 2 domain is found at 121 to 196; the sequence is ATDVEMPELG…DVGAVIARIG (76 aa). Lysine 162 carries the post-translational modification N6-lipoyllysine. A disordered region spans residues 200 to 240; it reads AAAAPAEEEAAPAEEEEPVKEEPKKEAAPEAPAATGAATDV. Acidic residues predominate over residues 205–218; that stretch reads AEEEAAPAEEEEPV. Residues 237–312 form the Lipoyl-binding 3 domain; sequence ATDVEMPELG…DVGAVIARIG (76 aa). An N6-lipoyllysine modification is found at lysine 278. Positions 316 to 368 are disordered; the sequence is AAAAPAEEEAAPAEEEEPVKEEPKKEEPKKEEPKKEAATTPAAASATVSASGD. The span at 321 to 334 shows a compositional bias: acidic residues; sequence AEEEAAPAEEEEPV. The span at 335-352 shows a compositional bias: basic and acidic residues; the sequence is KEEPKKEEPKKEEPKKEA. The segment covering 353-366 has biased composition (low complexity); sequence ATTPAAASATVSAS. Residues 372–409 enclose the Peripheral subunit-binding (PSBD) domain; it reads YVTPLVRKLAEKHGVDLNTVTGTGIGGRIRKQDVLAAA. Active-site residues include histidine 645 and aspartate 649.

Belongs to the 2-oxoacid dehydrogenase family. In terms of assembly, forms a 24-polypeptide structural core with octahedral symmetry. Part of an unusual ODH/PDH supercomplex, consisting of AceE (E1), AceF (E2), and Lpd (E3) together with OdhA (E1+E2). (R)-lipoate is required as a cofactor.

It catalyses the reaction N(6)-[(R)-dihydrolipoyl]-L-lysyl-[protein] + acetyl-CoA = N(6)-[(R)-S(8)-acetyldihydrolipoyl]-L-lysyl-[protein] + CoA. Functionally, is essential for both 2-oxoglutarate dehydrogenase (ODH) and pyruvate dehydrogenase (PDH) activities, but AceF has exclusively transacetylase (and no transsuccinylase) activity. The lipoyl residues required for ODH activity are likely provided by AceF. This chain is Dihydrolipoyllysine-residue acetyltransferase component of pyruvate dehydrogenase complex (aceF), found in Corynebacterium glutamicum (strain ATCC 13032 / DSM 20300 / JCM 1318 / BCRC 11384 / CCUG 27702 / LMG 3730 / NBRC 12168 / NCIMB 10025 / NRRL B-2784 / 534).